A 498-amino-acid chain; its full sequence is Pup deamidase/depupylase (498 aa).

6-10 (GTEVE) is a binding site for ATP. Mg(2+) contacts are provided by glutamate 8 and tyrosine 93. Aspartate 95 functions as the Proton acceptor in the catalytic mechanism. Glutamate 100 provides a ligand contact to Mg(2+). Residue 102 to 103 (SA) coordinates ATP. Residue histidine 156 coordinates Mg(2+). The ATP site is built by asparagine 158 and arginine 240. Histidine 242 serves as a coordination point for Mg(2+).

It belongs to the Pup ligase/Pup deamidase family. Pup deamidase subfamily. It depends on ATP as a cofactor.

It carries out the reaction [prokaryotic ubiquitin-like protein]-C-terminal-L-glutamine + H2O = [prokaryotic ubiquitin-like protein]-C-terminal-L-glutamate + NH4(+). Its pathway is protein degradation; proteasomal Pup-dependent pathway. Functionally, specifically catalyzes the deamidation of the C-terminal glutamine of the prokaryotic ubiquitin-like protein Pup to glutamate, thereby rendering Pup competent for conjugation. Probably also displays depupylase (DPUP) activity, removing conjugated Pup from target proteins; thus may be involved in the recycling of Pup and may function similarly to deubiquitinases (DUBs) in eukaryotes to prevent or promote proteasomal degradation of certain proteins. This is Pup deamidase/depupylase (dop) from Mycolicibacterium smegmatis (strain ATCC 700084 / mc(2)155) (Mycobacterium smegmatis).